The primary structure comprises 440 residues: NADH-quinone oxidoreductase subunit D (440 aa).

It belongs to the complex I 49 kDa subunit family. In terms of assembly, NDH-1 is composed of 14 different subunits. Subunits NuoB, C, D, E, F, and G constitute the peripheral sector of the complex.

The protein resides in the cell membrane. It catalyses the reaction a quinone + NADH + 5 H(+)(in) = a quinol + NAD(+) + 4 H(+)(out). NDH-1 shuttles electrons from NADH, via FMN and iron-sulfur (Fe-S) centers, to quinones in the respiratory chain. The immediate electron acceptor for the enzyme in this species is believed to be a menaquinone. Couples the redox reaction to proton translocation (for every two electrons transferred, four hydrogen ions are translocated across the cytoplasmic membrane), and thus conserves the redox energy in a proton gradient. The sequence is that of NADH-quinone oxidoreductase subunit D from Acidothermus cellulolyticus (strain ATCC 43068 / DSM 8971 / 11B).